The following is a 32-amino-acid chain: Fibrinolytic enzyme 2 (32 aa).

One can recognise a Peptidase S8 domain in the interval 1 to 32 (ISGTSMSCPHVAGRAYVLDTSLRVYLLDTGLR). S5 acts as the Charge relay system in catalysis.

Belongs to the peptidase S8 family.

Inhibited by PMSF. Not inhibited by benzamidine, aprotinin, SBTI, EDTA, EGTA, 2-mercaptoethanol, iodoacetic acid or pepstatin A. Serine protease. Has fibrinolytic and fibrinogenolytic but no plasminogenolytic activity. Cleaves after Arg and Lys residues. Cleaves fibrinogen alpha chain, beta chain and gamma chain in that order. The protein is Fibrinolytic enzyme 2 of Hediste japonica (Polychaete worm).